The chain runs to 83 residues: MKLTCALIVAMLFLTACQLTTTDDSRGRQKYPTERLRVKMRNPKLSKLTKTCDPPGDSCSRWYNHCCSKLCTSRNSGPTCSRP.

Residues 1-22 (MKLTCALIVAMLFLTACQLTTT) form the signal peptide. Positions 23 to 50 (DDSRGRQKYPTERLRVKMRNPKLSKLTK) are excised as a propeptide. Intrachain disulfides connect Cys52–Cys67, Cys59–Cys71, and Cys66–Cys80.

This sequence belongs to the conotoxin O1 superfamily. Expressed by the venom duct.

Its subcellular location is the secreted. In Conus lividus (Livid cone), this protein is Conotoxin LiCr95.